A 625-amino-acid chain; its full sequence is Phosphomethylpyrimidine synthase (625 aa).

Substrate is bound by residues Asn-231, Met-260, Tyr-289, His-325, 345-347 (SRG), 386-389 (DGLR), and Glu-425. Residue His-429 participates in Zn(2+) binding. Substrate is bound at residue Tyr-452. His-493 provides a ligand contact to Zn(2+). Positions 573, 576, and 581 each coordinate [4Fe-4S] cluster.

Belongs to the ThiC family. As to quaternary structure, homodimer. Requires [4Fe-4S] cluster as cofactor.

It carries out the reaction 5-amino-1-(5-phospho-beta-D-ribosyl)imidazole + S-adenosyl-L-methionine = 4-amino-2-methyl-5-(phosphooxymethyl)pyrimidine + CO + 5'-deoxyadenosine + formate + L-methionine + 3 H(+). It participates in cofactor biosynthesis; thiamine diphosphate biosynthesis. In terms of biological role, catalyzes the synthesis of the hydroxymethylpyrimidine phosphate (HMP-P) moiety of thiamine from aminoimidazole ribotide (AIR) in a radical S-adenosyl-L-methionine (SAM)-dependent reaction. This is Phosphomethylpyrimidine synthase from Acinetobacter baumannii (strain SDF).